A 144-amino-acid polypeptide reads, in one-letter code: Large ribosomal subunit protein uL15 (144 aa).

A compositionally biased stretch (basic and acidic residues) spans 1 to 10; sequence MKLHELKPAE. The segment at 1-52 is disordered; sequence MKLHELKPAEGSRQVRNRVGRGTSSGNGKTAGRGQKGQKARGKVRLGFEGGQ. Residues 23 to 35 show a composition bias toward gly residues; that stretch reads TSSGNGKTAGRGQ.

It belongs to the universal ribosomal protein uL15 family. Part of the 50S ribosomal subunit.

In terms of biological role, binds to the 23S rRNA. This Ligilactobacillus salivarius (strain UCC118) (Lactobacillus salivarius) protein is Large ribosomal subunit protein uL15.